The chain runs to 463 residues: Chromosomal replication initiator protein DnaA (463 aa).

A domain I, interacts with DnaA modulators region spans residues 1-83 (MSTNQIILTD…LQLFQHYNNT (83 aa)). The tract at residues 83 to 124 (TIKSIEIITKELPGTTQTVTELPTKTFADIGSSELNSENIFS) is domain II. The interval 125 to 343 (TLDVRFTFDN…GALNKVIAHS (219 aa)) is domain III, AAA+ region. The ATP site is built by Gly171, Gly173, Lys174, and Thr175. Residues 344–463 (NFTLKEITLE…IHLLMKILQN (120 aa)) form a domain IV, binds dsDNA region.

It belongs to the DnaA family. In terms of assembly, oligomerizes as a right-handed, spiral filament on DNA at oriC.

It localises to the cytoplasm. Plays an essential role in the initiation and regulation of chromosomal replication. ATP-DnaA binds to the origin of replication (oriC) to initiate formation of the DNA replication initiation complex once per cell cycle. Binds the DnaA box (a 9 base pair repeat at the origin) and separates the double-stranded (ds)DNA. Forms a right-handed helical filament on oriC DNA; dsDNA binds to the exterior of the filament while single-stranded (ss)DNA is stabiized in the filament's interior. The ATP-DnaA-oriC complex binds and stabilizes one strand of the AT-rich DNA unwinding element (DUE), permitting loading of DNA polymerase. After initiation quickly degrades to an ADP-DnaA complex that is not apt for DNA replication. Binds acidic phospholipids. The sequence is that of Chromosomal replication initiator protein DnaA from Rickettsia africae (strain ESF-5).